Here is a 320-residue protein sequence, read N- to C-terminus: ATP-dependent 6-phosphofructokinase (320 aa).

Glycine 12 is an ATP binding site. Arginine 22 to arginine 26 contributes to the ADP binding site. Residues arginine 73–phenylalanine 74 and glycine 103–serine 106 each bind ATP. Residue aspartate 104 participates in Mg(2+) binding. Threonine 126–aspartate 128 is a substrate binding site. Aspartate 128 (proton acceptor) is an active-site residue. Arginine 155 is an ADP binding site. Substrate-binding positions include arginine 163 and methionine 170–arginine 172. ADP contacts are provided by residues glycine 186 to glutamate 188, lysine 212, and lysine 214 to histidine 216. Substrate-binding positions include glutamate 223, arginine 244, and histidine 250–arginine 253.

Belongs to the phosphofructokinase type A (PFKA) family. ATP-dependent PFK group I subfamily. Prokaryotic clade 'B1' sub-subfamily. Homotetramer. Requires Mg(2+) as cofactor.

Its subcellular location is the cytoplasm. It catalyses the reaction beta-D-fructose 6-phosphate + ATP = beta-D-fructose 1,6-bisphosphate + ADP + H(+). The protein operates within carbohydrate degradation; glycolysis; D-glyceraldehyde 3-phosphate and glycerone phosphate from D-glucose: step 3/4. Allosterically activated by ADP and other diphosphonucleosides, and allosterically inhibited by phosphoenolpyruvate. Catalyzes the phosphorylation of D-fructose 6-phosphate to fructose 1,6-bisphosphate by ATP, the first committing step of glycolysis. In Blochmanniella floridana, this protein is ATP-dependent 6-phosphofructokinase.